The chain runs to 518 residues: GMP synthase [glutamine-hydrolyzing] (518 aa).

Residues 8-201 (TVLIIDFGSQ…VHKISGLKGN (194 aa)) enclose the Glutamine amidotransferase type-1 domain. C85 (nucleophile) is an active-site residue. Residues H175 and E177 contribute to the active site. The 192-residue stretch at 202–393 (WSMASYRDQA…LGLPEQFLGR (192 aa)) folds into the GMPS ATP-PPase domain. 229–235 (SGGVDSS) provides a ligand contact to ATP.

In terms of assembly, homodimer.

The enzyme catalyses XMP + L-glutamine + ATP + H2O = GMP + L-glutamate + AMP + diphosphate + 2 H(+). The protein operates within purine metabolism; GMP biosynthesis; GMP from XMP (L-Gln route): step 1/1. Catalyzes the synthesis of GMP from XMP. In Bartonella quintana (strain Toulouse) (Rochalimaea quintana), this protein is GMP synthase [glutamine-hydrolyzing].